The following is a 311-amino-acid chain: Transcription factor MafB (311 aa).

Disordered regions lie at residues 35–78 and 150–199; these read PLGR…PTEQ and EDLA…EDRF. The segment covering 54–76 has biased composition (low complexity); that stretch reads SVSSTPISTPCSSVPSSPSFSPT. Residues 157-167 show a composition bias toward basic residues; the sequence is HPHHHHHHHHQ. A compositionally biased stretch (low complexity) spans 168–194; that stretch reads ASPTPSTSSSSSQQLQTSHQQHPPSSS. The segment at 226 to 251 is basic motif; sequence RLKQKRRTLKNRGYAQSCRYKRVQQK. In terms of domain architecture, bZIP spans 226-289; it reads RLKQKRRTLK…DAYKLKCEKL (64 aa). Residues 254–275 are leucine-zipper; that stretch reads LENEKTQLIQQVEQLKQEVTRL.

This sequence belongs to the bZIP family. Maf subfamily. Homodimer or heterodimer with other bHLH-Zip transcription factors. Binds DNA as a homodimer or heterodimer. Self-associates; the interaction requires the intact MAFB leucine-zipper domain. Interacts with FOS, HOXD12 and PRRX1. As to expression, expressed in brain, thymus, gut, lung, mesenterium, spleen, kidney, ovary and bursa.

The protein resides in the nucleus. In terms of biological role, acts as a transcriptional activator or repressor. Positively regulates the expression of alpha-A crystallin genes during lens fiber cell differentiation. Binds to Maf recognition elements (MARE). The chain is Transcription factor MafB (MAFB) from Gallus gallus (Chicken).